We begin with the raw amino-acid sequence, 266 residues long: Undecaprenyl-diphosphatase (266 aa).

8 helical membrane-spanning segments follow: residues 1–21 (MDTF…FLPI), 39–59 (QGLS…VMYF), 87–107 (WWII…KDFI), 111–131 (FRSI…LWWA), 144–164 (VGWK…IPGT), 183–203 (AAAR…AILV), 218–238 (ALGL…HYFL), and 246–266 (MTPF…IIFL).

Belongs to the UppP family.

The protein localises to the cell inner membrane. The enzyme catalyses di-trans,octa-cis-undecaprenyl diphosphate + H2O = di-trans,octa-cis-undecaprenyl phosphate + phosphate + H(+). In terms of biological role, catalyzes the dephosphorylation of undecaprenyl diphosphate (UPP). Confers resistance to bacitracin. This chain is Undecaprenyl-diphosphatase, found in Shewanella pealeana (strain ATCC 700345 / ANG-SQ1).